Here is a 91-residue protein sequence, read N- to C-terminus: UPF0512 protein F (91 aa).

The protein belongs to the UPF0512 family.

This Dictyostelium discoideum (Social amoeba) protein is UPF0512 protein F.